Here is an 819-residue protein sequence, read N- to C-terminus: Leucine--tRNA ligase (819 aa).

Positions P40–H51 match the 'HIGH' region motif. Positions K600–S604 match the 'KMSKS' region motif. Residue K603 participates in ATP binding.

This sequence belongs to the class-I aminoacyl-tRNA synthetase family.

Its subcellular location is the cytoplasm. The enzyme catalyses tRNA(Leu) + L-leucine + ATP = L-leucyl-tRNA(Leu) + AMP + diphosphate. The sequence is that of Leucine--tRNA ligase from Chlamydia trachomatis serovar L2 (strain ATCC VR-902B / DSM 19102 / 434/Bu).